Here is a 173-residue protein sequence, read N- to C-terminus: Protein FAM180A (173 aa).

Residues 1–17 (MHWKMLLLLLLYYNAEA) form the signal peptide.

This sequence belongs to the FAM180 family.

It localises to the secreted. This is Protein FAM180A (FAM180A) from Homo sapiens (Human).